Here is a 642-residue protein sequence, read N- to C-terminus: 1-deoxy-D-xylulose-5-phosphate synthase 2 (642 aa).

Residues His73 and 113–115 contribute to the thiamine diphosphate site; that span reads SHA. Asp144 contributes to the Mg(2+) binding site. Thiamine diphosphate-binding positions include 145 to 146, Asn174, Tyr285, and Glu366; that span reads GA. Asn174 is a Mg(2+) binding site.

Belongs to the transketolase family. DXPS subfamily. As to quaternary structure, homodimer. Mg(2+) serves as cofactor. The cofactor is thiamine diphosphate.

The enzyme catalyses D-glyceraldehyde 3-phosphate + pyruvate + H(+) = 1-deoxy-D-xylulose 5-phosphate + CO2. The protein operates within metabolic intermediate biosynthesis; 1-deoxy-D-xylulose 5-phosphate biosynthesis; 1-deoxy-D-xylulose 5-phosphate from D-glyceraldehyde 3-phosphate and pyruvate: step 1/1. In terms of biological role, catalyzes the acyloin condensation reaction between C atoms 2 and 3 of pyruvate and glyceraldehyde 3-phosphate to yield 1-deoxy-D-xylulose-5-phosphate (DXP). This chain is 1-deoxy-D-xylulose-5-phosphate synthase 2, found in Streptomyces avermitilis (strain ATCC 31267 / DSM 46492 / JCM 5070 / NBRC 14893 / NCIMB 12804 / NRRL 8165 / MA-4680).